A 430-amino-acid polypeptide reads, in one-letter code: Chaperone SurA (430 aa).

The signal sequence occupies residues 1–25 (MQIIKTTIATFTAIAFTGAASFTSA). PpiC domains are found at residues 176–277 (SPDY…KLYE) and 286–385 (VNQT…KVEE).

The protein localises to the periplasm. The enzyme catalyses [protein]-peptidylproline (omega=180) = [protein]-peptidylproline (omega=0). Its function is as follows. Chaperone involved in the correct folding and assembly of outer membrane proteins. Recognizes specific patterns of aromatic residues and the orientation of their side chains, which are found more frequently in integral outer membrane proteins. May act in both early periplasmic and late outer membrane-associated steps of protein maturation. The sequence is that of Chaperone SurA from Saccharophagus degradans (strain 2-40 / ATCC 43961 / DSM 17024).